The following is a 318-amino-acid chain: uncharacterized protein (318 aa).

This is an uncharacterized protein from Escherichia coli (strain K12).